A 43-amino-acid chain; its full sequence is Protein PsbN (43 aa).

The helical transmembrane segment at 5–27 (TLVXISISGSLVSFTGYALYTAF) threads the bilayer.

It belongs to the PsbN family.

It is found in the plastid. It localises to the chloroplast thylakoid membrane. Its function is as follows. May play a role in photosystem I and II biogenesis. In Calycanthus floridus (Eastern sweetshrub), this protein is Protein PsbN.